The following is a 424-amino-acid chain: 3-ketoacyl-CoA thiolase A, peroxisomal (424 aa).

The N-terminal 26 residues, methionine 1–cysteine 26, are a transit peptide targeting the peroxisome. The tract at residues methionine 1–cysteine 26 is PTS2-type peroxisomal targeting signal. Cysteine 123 acts as the Acyl-thioester intermediate in catalysis. Lysine 173 and lysine 234 each carry N6-acetyllysine. Catalysis depends on proton acceptor residues histidine 377 and cysteine 408.

This sequence belongs to the thiolase-like superfamily. Thiolase family. Homodimer. Interacts (via PTS2-type peroxisomal targeting signal region) with PEX7; leading to its translocation into peroxisomes. Mainly expressed in liver and intestine.

It localises to the peroxisome. The catalysed reaction is an acyl-CoA + acetyl-CoA = a 3-oxoacyl-CoA + CoA. The enzyme catalyses 2 acetyl-CoA = acetoacetyl-CoA + CoA. It catalyses the reaction tetradecanoyl-CoA + acetyl-CoA = 3-oxohexadecanoyl-CoA + CoA. It carries out the reaction hexanoyl-CoA + acetyl-CoA = 3-oxooctanoyl-CoA + CoA. The catalysed reaction is 3-oxohexadecanedioyl-CoA + CoA = tetradecanedioyl-CoA + acetyl-CoA. The enzyme catalyses 3-oxo-(6Z,9Z,12Z,15Z,18Z,21Z)-tetracosahexaenoyl-CoA + CoA = (4Z,7Z,10Z,13Z,16Z,19Z)-docosahexaenoyl-CoA + acetyl-CoA. The protein operates within lipid metabolism; peroxisomal fatty acid beta-oxidation. Its function is as follows. Responsible for the thiolytic cleavage of straight chain 3-keto fatty acyl-CoAs (3-oxoacyl-CoAs). Plays an important role in fatty acid peroxisomal beta-oxidation. Catalyzes the cleavage of short, medium, long, and very long straight chain 3-oxoacyl-CoAs. This is 3-ketoacyl-CoA thiolase A, peroxisomal from Mus musculus (Mouse).